A 407-amino-acid chain; its full sequence is E3 ubiquitin-protein ligase TRIM13 (407 aa).

Residues 10–58 (CPICCSLFDDPRVLPCSHNFCKKCLEGILEGNVRNSLWRSSPFKCPTCR) form an RING-type zinc finger. The B box-type zinc finger occupies 89 to 131 (PKMPVCKGHLGQPLNIFCLTDMQLICGICATRGEHTKHVFCSI). 4 residues coordinate Zn(2+): C94, H97, C117, and H123. The stretch at 172 to 200 (LQLLTKDSDKVKEFFEKLQYTLDQKKNEI) forms a coiled coil. Residues 316-336 (PLFVVVILLGLLIFFSPTMFL) form a helical membrane-spanning segment.

As to quaternary structure, interacts (via C-terminal domain) with VCP. Interacts with AKT1; the interaction ubiquitinates AKT1 and leads to its proteasomal degradation. Interacts with MDM2; the interaction ubiquitinates AKT1 and leads to its proteasomal degradation. Interacts with p62/SQSTM1. Interacts with TRAF6. Interacts with IKBKG/NEMO. Auto-ubiquitinated; requires the RING-type zinc finger. Auto-polyubiquitination leads to proteasomal degradation.

It is found in the endoplasmic reticulum membrane. It carries out the reaction S-ubiquitinyl-[E2 ubiquitin-conjugating enzyme]-L-cysteine + [acceptor protein]-L-lysine = [E2 ubiquitin-conjugating enzyme]-L-cysteine + N(6)-ubiquitinyl-[acceptor protein]-L-lysine.. It participates in protein modification; protein ubiquitination. Functionally, endoplasmic reticulum (ER) membrane anchored E3 ligase involved in the retrotranslocation and turnover of membrane and secretory proteins from the ER through a set of processes named ER-associated degradation (ERAD). This process acts on misfolded proteins as well as in the regulated degradation of correctly folded proteins. Enhances ionizing radiation-induced p53/TP53 stability and apoptosis via ubiquitinating MDM2 and AKT1 and decreasing AKT1 kinase activity through MDM2 and AKT1 proteasomal degradation. Regulates ER stress-induced autophagy, and may act as a tumor suppressor. Also plays a role in innate immune response by stimulating NF-kappa-B activity in the TLR2 signaling pathway. Ubiquitinates TRAF6 via the 'Lys-29'-linked polyubiquitination chain resulting in NF-kappa-B activation. Participates as well in T-cell receptor-mediated NF-kappa-B activation. In the presence of TNF, modulates the IKK complex by regulating IKBKG/NEMO ubiquitination leading to the repression of NF-kappa-B. In Bos taurus (Bovine), this protein is E3 ubiquitin-protein ligase TRIM13 (TRIM13).